Consider the following 37-residue polypeptide: TVTCGQVASALSPCIDYLQKDGAVPAGSCCXKXLSSA.

It belongs to the plant LTP family.

Its subcellular location is the secreted. Functionally, plant non-specific lipid-transfer proteins transfer phospholipids as well as galactolipids across membranes. May play a role in wax or cutin deposition in the cell walls of expanding epidermal cells and certain secretory tissues. The polypeptide is Non-specific lipid-transfer protein P4 (Vitis sp. (Grape)).